A 164-amino-acid polypeptide reads, in one-letter code: Nucleotide-binding protein EF_1165 (164 aa).

The protein belongs to the YajQ family.

Its function is as follows. Nucleotide-binding protein. This Enterococcus faecalis (strain ATCC 700802 / V583) protein is Nucleotide-binding protein EF_1165.